A 210-amino-acid chain; its full sequence is Uracil phosphoribosyltransferase (210 aa).

Residues Arg-78, Arg-103, and 130-138 (DPMLATGGS) contribute to the 5-phospho-alpha-D-ribose 1-diphosphate site. Uracil contacts are provided by residues Ile-195 and 200 to 202 (GDA). Asp-201 is a binding site for 5-phospho-alpha-D-ribose 1-diphosphate.

Belongs to the UPRTase family. The cofactor is Mg(2+).

It carries out the reaction UMP + diphosphate = 5-phospho-alpha-D-ribose 1-diphosphate + uracil. The protein operates within pyrimidine metabolism; UMP biosynthesis via salvage pathway; UMP from uracil: step 1/1. With respect to regulation, allosterically activated by GTP. Catalyzes the conversion of uracil and 5-phospho-alpha-D-ribose 1-diphosphate (PRPP) to UMP and diphosphate. This chain is Uracil phosphoribosyltransferase, found in Leifsonia xyli subsp. xyli (strain CTCB07).